The primary structure comprises 147 residues: Large ribosomal subunit protein uL15 (147 aa).

The segment at 1–62 (MDLSNLRPAI…GQMPLQRRLP (62 aa)) is disordered. Gly residues-rich tracts occupy residues 21–31 (RGPGSGNGKTA) and 42–52 (SGGGVKPGFEG).

This sequence belongs to the universal ribosomal protein uL15 family. In terms of assembly, part of the 50S ribosomal subunit.

Functionally, binds to the 23S rRNA. The protein is Large ribosomal subunit protein uL15 of Syntrophotalea carbinolica (strain DSM 2380 / NBRC 103641 / GraBd1) (Pelobacter carbinolicus).